Here is an 834-residue protein sequence, read N- to C-terminus: Periplasmic nitrate reductase (834 aa).

The segment at residues 1-29 (MNLTRREFAKANAAAIAAAAAGLPILVRA) is a signal peptide (tat-type signal). The region spanning 41-97 (LVWNKAPCRFCGTGCSVMVATRDGQVVATHGDIKAEVNRGINCVKGYFLSKIMYGSD) is the 4Fe-4S Mo/W bis-MGD-type domain. Residues C48, C51, C55, and C83 each coordinate [4Fe-4S] cluster. Mo-bis(molybdopterin guanine dinucleotide) contacts are provided by residues K85, Q152, N177, C181, 214-221 (WGSNMAEM), 245-249 (STFEH), 264-266 (QTD), M375, Q379, N485, 511-512 (SD), K534, D561, and 721-730 (TGRVLEHWHT). F797 is a binding site for substrate. Residues N805 and K822 each contribute to the Mo-bis(molybdopterin guanine dinucleotide) site.

Belongs to the prokaryotic molybdopterin-containing oxidoreductase family. NasA/NapA/NarB subfamily. In terms of assembly, component of the periplasmic nitrate reductase NapAB complex composed of NapA and NapB. The cofactor is [4Fe-4S] cluster. It depends on Mo-bis(molybdopterin guanine dinucleotide) as a cofactor. In terms of processing, predicted to be exported by the Tat system. The position of the signal peptide cleavage has not been experimentally proven.

The protein localises to the periplasm. It carries out the reaction 2 Fe(II)-[cytochrome] + nitrate + 2 H(+) = 2 Fe(III)-[cytochrome] + nitrite + H2O. In terms of biological role, catalytic subunit of the periplasmic nitrate reductase complex NapAB. Receives electrons from NapB and catalyzes the reduction of nitrate to nitrite. The sequence is that of Periplasmic nitrate reductase from Pseudomonas aeruginosa (strain UCBPP-PA14).